Reading from the N-terminus, the 533-residue chain is MEDSTEDIIKSFTLEQSPEIKPKPKSKTSDLTDIVYAMDDDSIKMKKFTIFDDKYDQNVSDSEHDLTPIKRKRQQQPPPPQQPSKFSSSIPQKPTLSPKKLASSPTKNYTDHINQLRSGPNSPKKYQEDENVRSLKYEIKRLKQEQNLKLENLQNKIEYLTKERDELQDQLTSMSFENDKLAKKNRSLSHENNHLTLENSKLKTKEYSNEDLQLEKNKLQRMNNTLRSERDELVKDFNLTRDKLKKYYDLYLHCQKNHVNVKSQRTEVGGDKPTADNISTNEELVDILRKLSEMMIDQNKMSEPIAAIEKDKPSEDKTSSPNFDSSKDAPRIVSEFLEEFIKRIVEEMSANSKSAPSSKQHINSEMYSQPNNFSNNTMPPSQSAAYIPSNSQPAPRPAAAAAANIYSSSTPNTNGYNQSSHSNDRPNTFELPRVERDHWTDRPPSERSTQSTKYMKMDPEEIRKLVVIITDQLKKEENNEKSSNTLDSETPIEKCQCCHGNPRNVNEPTNQKLCQSCLNKGDFTMSEFMGHSN.

2 disordered regions span residues 1 to 32 and 53 to 130; these read MEDS…SDLT and DKYD…QEDE. Basic and acidic residues-rich tracts occupy residues 18–30 and 53–68; these read PEIK…KTSD and DKYD…DLTP. A compositionally biased stretch (low complexity) spans 83–94; sequence PSKFSSSIPQKP. Residues 103-121 show a composition bias toward polar residues; it reads SSPTKNYTDHINQLRSGPN. Residues 136 to 236 adopt a coiled-coil conformation; sequence KYEIKRLKQE…RSERDELVKD (101 aa). Residues 309–318 show a composition bias toward basic and acidic residues; it reads EKDKPSEDKT. Disordered regions lie at residues 309–329 and 349–453; these read EKDK…SKDA and SANS…QSTK. Composition is skewed to polar residues over residues 349-392 and 405-421; these read SANS…SNSQ and IYSS…QSSH. A compositionally biased stretch (basic and acidic residues) spans 432 to 445; it reads PRVERDHWTDRPPS.

It is found in the cytoplasm. Its subcellular location is the cytoskeleton. The protein localises to the microtubule organizing center. The protein resides in the spindle pole body. In terms of biological role, plays a role in mitotic spindle pole body organization, possibly at the point of spindle pole body separation. Required for mitotic exit. This is Spindle pole body protein CSA6 from Candida dubliniensis (strain CD36 / ATCC MYA-646 / CBS 7987 / NCPF 3949 / NRRL Y-17841) (Yeast).